The chain runs to 165 residues: NADPH-dependent 7-cyano-7-deazaguanine reductase (165 aa).

The Thioimide intermediate role is filled by Cys-56. Residue Asp-63 is the Proton donor of the active site. Residues Val-78–Ser-80 and His-97–Glu-98 contribute to the substrate site.

This sequence belongs to the GTP cyclohydrolase I family. QueF type 1 subfamily.

It is found in the cytoplasm. It carries out the reaction 7-aminomethyl-7-carbaguanine + 2 NADP(+) = 7-cyano-7-deazaguanine + 2 NADPH + 3 H(+). Its pathway is tRNA modification; tRNA-queuosine biosynthesis. Its function is as follows. Catalyzes the NADPH-dependent reduction of 7-cyano-7-deazaguanine (preQ0) to 7-aminomethyl-7-deazaguanine (preQ1). The polypeptide is NADPH-dependent 7-cyano-7-deazaguanine reductase (Bacillus anthracis (strain A0248)).